The primary structure comprises 214 residues: Pyridoxine/pyridoxamine 5'-phosphate oxidase (214 aa).

Substrate contacts are provided by residues 9-12 and lysine 67; that span reads RLDY. FMN-binding positions include 62-67, 77-78, lysine 84, and glutamine 106; these read RMVLLK and FT. Substrate is bound by residues tyrosine 124, arginine 128, and serine 132. FMN-binding positions include 141-142 and tryptophan 186; that span reads QS. 192 to 194 serves as a coordination point for substrate; sequence RLH. Arginine 196 serves as a coordination point for FMN.

Belongs to the pyridoxamine 5'-phosphate oxidase family. As to quaternary structure, homodimer. FMN serves as cofactor.

It carries out the reaction pyridoxamine 5'-phosphate + O2 + H2O = pyridoxal 5'-phosphate + H2O2 + NH4(+). The catalysed reaction is pyridoxine 5'-phosphate + O2 = pyridoxal 5'-phosphate + H2O2. The protein operates within cofactor metabolism; pyridoxal 5'-phosphate salvage; pyridoxal 5'-phosphate from pyridoxamine 5'-phosphate: step 1/1. It functions in the pathway cofactor metabolism; pyridoxal 5'-phosphate salvage; pyridoxal 5'-phosphate from pyridoxine 5'-phosphate: step 1/1. Functionally, catalyzes the oxidation of either pyridoxine 5'-phosphate (PNP) or pyridoxamine 5'-phosphate (PMP) into pyridoxal 5'-phosphate (PLP). The sequence is that of Pyridoxine/pyridoxamine 5'-phosphate oxidase from Microcystis aeruginosa (strain NIES-843 / IAM M-2473).